The following is a 312-amino-acid chain: Undecaprenyl-diphosphatase (312 aa).

7 helical membrane-spanning segments follow: residues 74–94, 122–142, 154–174, 183–203, 226–246, 254–274, and 288–308; these read GVAF…WYFW, VSIG…KVFI, VAIA…ERIG, LDIR…IPGV, FSFL…LKTL, VGLV…YIAI, and IFIW…ISGV.

Belongs to the UppP family.

The protein localises to the cell inner membrane. It carries out the reaction di-trans,octa-cis-undecaprenyl diphosphate + H2O = di-trans,octa-cis-undecaprenyl phosphate + phosphate + H(+). Its function is as follows. Catalyzes the dephosphorylation of undecaprenyl diphosphate (UPP). Confers resistance to bacitracin. This is Undecaprenyl-diphosphatase from Trichodesmium erythraeum (strain IMS101).